Consider the following 320-residue polypeptide: Cytochrome f (320 aa).

Residues 1-35 (MHTKNLFYSRPQQITQYLSAFLMMVILTRTSISSA) form the signal peptide. The heme site is built by Tyr36, Cys56, Cys59, and His60. The chain crosses the membrane as a helical span at residues 286–306 (VQVLLFFFASIILAQIFLVLK).

It belongs to the cytochrome f family. The 4 large subunits of the cytochrome b6-f complex are cytochrome b6, subunit IV (17 kDa polypeptide, petD), cytochrome f and the Rieske protein, while the 4 small subunits are PetG, PetL, PetM and PetN. The complex functions as a dimer. The cofactor is heme.

Its subcellular location is the plastid thylakoid membrane. Functionally, component of the cytochrome b6-f complex, which mediates electron transfer between photosystem II (PSII) and photosystem I (PSI), cyclic electron flow around PSI, and state transitions. The protein is Cytochrome f of Cuscuta obtusiflora (Peruvian dodder).